The following is a 314-amino-acid chain: Bifunctional pinoresinol-lariciresinol reductase 3 (314 aa).

NADP(+)-binding positions include Gly-11–Gly-17, Arg-36, and Lys-45. Lys-138 functions as the Proton acceptor in the catalytic mechanism. Arg-142 provides a ligand contact to NADP(+). His-272 is a binding site for substrate.

This sequence belongs to the NmrA-type oxidoreductase family. Isoflavone reductase subfamily. In terms of assembly, dimer.

The catalysed reaction is (-)-lariciresinol + NADP(+) = (-)-pinoresinol + NADPH + H(+). It carries out the reaction (+)-secoisolariciresinol + NADP(+) = (-)-lariciresinol + NADPH + H(+). Functionally, reductase involved in lignan biosynthesis. Catalyzes the enantioselective sequential conversion of (-)-pinoresinol into (-)-lariciresinol and of (-)-lariciresinol into (+)-secoisolariciresinol. Abstracts the 4R-hydride from the NADPH cofactor during catalysis. This Thuja plicata (Western red-cedar) protein is Bifunctional pinoresinol-lariciresinol reductase 3.